A 179-amino-acid polypeptide reads, in one-letter code: MAFLSSGAYLTHQQKVLRLYKRALRHLESWCIHRDKYRYFACLLRARFDEHKNEKDMVKATQLLREAEEEFWHGQHPQPYIFPESPGGTSYERYECYKVPEWCLDDWHPSEKAMYPDYFAKREQWKKLRRESWEREVKQLQEETPVGGPRTEALPPARKQGDLPPLWWHIVTRPRERPM.

N-acetylalanine is present on alanine 2. Serine 85 bears the Phosphoserine mark. Positions 139–160 are disordered; it reads QLQEETPVGGPRTEALPPARKQ.

Belongs to the complex I LYR family. Mammalian complex I is composed of 45 different subunits.

The protein localises to the mitochondrion inner membrane. Accessory subunit of the mitochondrial membrane respiratory chain NADH dehydrogenase (Complex I), that is believed to be not involved in catalysis. Complex I functions in the transfer of electrons from NADH to the respiratory chain. The immediate electron acceptor for the enzyme is believed to be ubiquinone. The polypeptide is NADH dehydrogenase [ubiquinone] 1 beta subcomplex subunit 9 (NDUFB9) (Bos taurus (Bovine)).